The chain runs to 426 residues: Dihydroorotase (426 aa).

Positions 59 and 61 each coordinate Zn(2+). Residues 61 to 63 (HLR) and N93 each bind substrate. Zn(2+) is bound by residues D151, H178, and H232. N279 provides a ligand contact to substrate. Position 306 (D306) interacts with Zn(2+). D306 is a catalytic residue. Substrate-binding positions include H310 and 324–325 (FG).

This sequence belongs to the metallo-dependent hydrolases superfamily. DHOase family. Class I DHOase subfamily. Requires Zn(2+) as cofactor.

It carries out the reaction (S)-dihydroorotate + H2O = N-carbamoyl-L-aspartate + H(+). It participates in pyrimidine metabolism; UMP biosynthesis via de novo pathway; (S)-dihydroorotate from bicarbonate: step 3/3. Its function is as follows. Catalyzes the reversible cyclization of carbamoyl aspartate to dihydroorotate. The protein is Dihydroorotase of Brevibacillus brevis (strain 47 / JCM 6285 / NBRC 100599).